The following is a 272-amino-acid chain: MLAVSSHNLWIALAVTLAAGLATGLGSLMVVFAKKPNPRLLAFGLAFAGGAMVYVSLTEILNKSIAAFSQAYNDKLGFTFGTLTFLGGMLLIMVIDRLVPNPHQSLSSDDPQFREDNRAYIRRVGLMTAVAITAHNFPEGLATFFATLESPAVGMPLAFAIAIHNIPEGIAIAVPVYFATRNKFYAVGASLLSGLAEPVGAGIGYLALFSVLSDAVFGTVFGLISGVMVFLALDELLPAAKRYAQGHETVYGLVSGMGTLAISLVLFRFATP.

Transmembrane regions (helical) follow at residues 11 to 31 (IALA…LMVV), 40 to 60 (LLAF…LTEI), 76 to 96 (LGFT…MVID), 126 to 146 (LMTA…TFFA), 158 to 178 (AFAI…PVYF), 189 to 209 (ASLL…LALF), 211 to 231 (VLSD…MVFL), and 250 to 270 (VYGL…FRFA). 2 residues coordinate Fe(2+): asparagine 136 and glutamate 139. Positions 139 and 164 each coordinate Zn(2+). Asparagine 165, glutamate 168, and glutamate 197 together coordinate Fe(2+). Glutamate 168 provides a ligand contact to Zn(2+).

This sequence belongs to the ZIP transporter (TC 2.A.5) family. ZupT subfamily.

Its subcellular location is the cell inner membrane. It catalyses the reaction Zn(2+)(in) = Zn(2+)(out). Mediates zinc uptake. May also transport other divalent cations. The polypeptide is Zinc transporter ZupT (Xanthomonas axonopodis pv. citri (strain 306)).